A 562-amino-acid polypeptide reads, in one-letter code: 4-coumarate--CoA ligase-like 9 (562 aa).

The ATP site is built by serine 212, serine 213, glycine 214, threonine 215, threonine 216, and lysine 220. CoA is bound at residue arginine 281. The segment at 283 to 352 (ELEAMFKAVE…QKFPDVDIVQ (70 aa)) is SBD1. 5 residues coordinate ATP: glutamine 352, glycine 353, threonine 357, aspartate 438, and arginine 453. The interval 353–417 (GYGLTESSGP…LRGPVIMKGY (65 aa)) is SBD2. Residues lysine 461 and alanine 462 each coordinate CoA. An ATP-binding site is contributed by lysine 544. Positions 560-562 (SKL) match the Microbody targeting signal motif.

It belongs to the ATP-dependent AMP-binding enzyme family. Requires Mg(2+) as cofactor. In terms of tissue distribution, expressed at low level in leaves.

Its subcellular location is the peroxisome. It carries out the reaction (9S,13S,15Z)-12-oxophyto-10,15-dienoate + ATP + CoA = (10Z,15Z)-12-oxophytodienoyl-CoA + AMP + diphosphate. The catalysed reaction is hexadecanoate + ATP + CoA = hexadecanoyl-CoA + AMP + diphosphate. The enzyme catalyses (9Z)-octadecenoate + ATP + CoA = (9Z)-octadecenoyl-CoA + AMP + diphosphate. It catalyses the reaction octadecanoate + ATP + CoA = octadecanoyl-CoA + AMP + diphosphate. It carries out the reaction tetradecanoate + ATP + CoA = tetradecanoyl-CoA + AMP + diphosphate. The catalysed reaction is dodecanoate + ATP + CoA = dodecanoyl-CoA + AMP + diphosphate. The enzyme catalyses decanoate + ATP + CoA = decanoyl-CoA + AMP + diphosphate. It catalyses the reaction octanoate + ATP + CoA = octanoyl-CoA + AMP + diphosphate. It carries out the reaction (9Z,12Z)-octadecadienoate + ATP + CoA = (9Z,12Z)-octadecadienoyl-CoA + AMP + diphosphate. The catalysed reaction is (9Z,12Z,15Z)-octadecatrienoate + ATP + CoA = (9Z,12Z,15Z)-octadecatrienoyl-CoA + AMP + diphosphate. The enzyme catalyses nonanoate + ATP + CoA = nonanoyl-CoA + AMP + diphosphate. Functionally, contributes to jasmonic acid biosynthesis by initiating the beta-oxidative chain shortening of its precursors. Converts 12-oxo-phytodienoic acid (OPDA) into OPDA-CoA. Follows a two-step reaction mechanism, wherein the carboxylate substrate first undergoes adenylation by ATP, followed by a thioesterification in the presence of CoA to yield the final CoA thioester. This Arabidopsis thaliana (Mouse-ear cress) protein is 4-coumarate--CoA ligase-like 9.